The chain runs to 372 residues: MNYPLTLEMDLENLEDLFWELDRLDNYNDTSLVENHLCPATEGPLMASFKAVFVPVAYSLIFLLGVIGNVLVLVILERHRQTRSSTETFLFHLAVADLLLVFILPFAVAEGSVGWVLGTFLCKTVIALHKVNFYCSSLLLACIAVDRYLAIVHAVHAYRHRRLLSIHITCGTIWLVGFLLALPEILFAKVSQGHHNNSLPRCTFSQENQAETHAWFTSRFLYHVAGFLLPMLVMGWCYVGVVHRLRQAQRRPQRQKAVRVAILVTSIFFLCWSPYHIVIFLDTLARLKAVDNTCKLNGSLPVAITMCEFLGLAHCCLNPMLYTFAGVKFRSDLSRLLTKLGCTGPASLCQLFPSWRRSSLSESENATSLTTF.

The Extracellular portion of the chain corresponds to 1-55; sequence MNYPLTLEMDLENLEDLFWELDRLDNYNDTSLVENHLCPATEGPLMASFKAVFVP. N-linked (GlcNAc...) asparagine glycosylation occurs at Asn-28. The helical transmembrane segment at 56–76 threads the bilayer; sequence VAYSLIFLLGVIGNVLVLVIL. Over 77-88 the chain is Cytoplasmic; the sequence is ERHRQTRSSTET. Residues 89-109 traverse the membrane as a helical segment; it reads FLFHLAVADLLLVFILPFAVA. The Extracellular portion of the chain corresponds to 110 to 124; it reads EGSVGWVLGTFLCKT. Cys-122 and Cys-202 are disulfide-bonded. Residues 125 to 145 form a helical membrane-spanning segment; sequence VIALHKVNFYCSSLLLACIAV. Residues 146 to 167 are Cytoplasmic-facing; sequence DRYLAIVHAVHAYRHRRLLSIH. Residues 168-188 form a helical membrane-spanning segment; that stretch reads ITCGTIWLVGFLLALPEILFA. At 189–219 the chain is on the extracellular side; the sequence is KVSQGHHNNSLPRCTFSQENQAETHAWFTSR. N-linked (GlcNAc...) asparagine glycosylation occurs at Asn-196. A helical membrane pass occupies residues 220–240; that stretch reads FLYHVAGFLLPMLVMGWCYVG. Over 241–259 the chain is Cytoplasmic; sequence VVHRLRQAQRRPQRQKAVR. A helical transmembrane segment spans residues 260-280; that stretch reads VAILVTSIFFLCWSPYHIVIF. Residues 281 to 304 are Extracellular-facing; the sequence is LDTLARLKAVDNTCKLNGSLPVAI. A helical membrane pass occupies residues 305-325; sequence TMCEFLGLAHCCLNPMLYTFA. Residues 326-372 lie on the Cytoplasmic side of the membrane; it reads GVKFRSDLSRLLTKLGCTGPASLCQLFPSWRRSSLSESENATSLTTF.

Belongs to the G-protein coupled receptor 1 family. As to expression, expression in mature B-cells and Burkitt lymphoma cells.

It is found in the cell membrane. In terms of biological role, cytokine receptor that binds to B-lymphocyte chemoattractant (BLC). Involved in B-cell migration into B-cell follicles of spleen and Peyer patches but not into those of mesenteric or peripheral lymph nodes. May have a regulatory function in Burkitt lymphoma (BL) lymphomagenesis and/or B-cell differentiation. The protein is C-X-C chemokine receptor type 5 (CXCR5) of Homo sapiens (Human).